Here is a 240-residue protein sequence, read N- to C-terminus: Uridylate kinase (240 aa).

12 to 15 (KLSG) is an ATP binding site. The tract at residues 20 to 25 (GEKGFG) is involved in allosteric activation by GTP. Gly54 serves as a coordination point for UMP. Gly55 and Arg59 together coordinate ATP. UMP-binding positions include Asp74 and 135 to 142 (TGSPYFST). 3 residues coordinate ATP: Asn163, Tyr169, and Asp172.

The protein belongs to the UMP kinase family. As to quaternary structure, homohexamer.

The protein resides in the cytoplasm. The catalysed reaction is UMP + ATP = UDP + ADP. The protein operates within pyrimidine metabolism; CTP biosynthesis via de novo pathway; UDP from UMP (UMPK route): step 1/1. Its activity is regulated as follows. Allosterically activated by GTP. Inhibited by UTP. In terms of biological role, catalyzes the reversible phosphorylation of UMP to UDP. This is Uridylate kinase from Limosilactobacillus reuteri (Lactobacillus reuteri).